The sequence spans 406 residues: COP9 signalosome complex subunit 4 (406 aa).

The residue at position 2 (alanine 2) is an N-acetylalanine. At lysine 25 the chain carries N6-acetyllysine. The region spanning tyrosine 197–alanine 366 is the PCI domain.

This sequence belongs to the CSN4 family. Component of the CSN complex, composed of COPS1/GPS1, COPS2, COPS3, COPS4, COPS5, COPS6, COPS7 (COPS7A or COPS7B), COPS8 and COPS9. In the complex, it probably interacts directly with COPS1, COPS2, COPS3, COPS5, COPS6, COPS7 (COPS7A or COPS7B) and COPS8. Interacts with TOR1A; the interaction is direct and associates TOR1A and SNAPIN with the CSN complex. Interacts with STON2; controls STON2 neddylation levels. Interacts with ERCC6.

The protein resides in the cytoplasm. It localises to the nucleus. The protein localises to the cytoplasmic vesicle. Its subcellular location is the secretory vesicle. It is found in the synaptic vesicle. Functionally, component of the COP9 signalosome complex (CSN), a complex involved in various cellular and developmental processes. The CSN complex is an essential regulator of the ubiquitin (Ubl) conjugation pathway by mediating the deneddylation of the cullin subunits of SCF-type E3 ligase complexes, leading to decrease the Ubl ligase activity of SCF-type complexes such as SCF, CSA or DDB2. Also involved in the deneddylation of non-cullin subunits such as STON2. The complex is also involved in phosphorylation of p53/TP53, c-jun/JUN, IkappaBalpha/NFKBIA, ITPK1, IRF8/ICSBP and SNAPIN, possibly via its association with CK2 and PKD kinases. CSN-dependent phosphorylation of TP53 and JUN promotes and protects degradation by the Ubl system, respectively. This is COP9 signalosome complex subunit 4 (COPS4) from Bos taurus (Bovine).